Reading from the N-terminus, the 432-residue chain is Luc7-like protein 3 (432 aa).

At Met1 the chain carries N-acetylmethionine. Phosphoserine occurs at positions 3, 110, and 115. The stretch at 124-181 (KNEEKIQVLTDKIDVLLQQIEELGSEGKVEEAQGMMKLVEQLKEERELLRSTTSTIES) forms a coiled coil. An N6-acetyllysine modification is found at Lys231. Positions 234 to 287 (LRKRTEEPDRDERLKKEKQEREEREKEREREREERERKRRREEEEREKERARDR) are enriched in basic and acidic residues. A disordered region spans residues 234–432 (LRKRTEEPDR…IKSEGDTQSN (199 aa)). The segment covering 288 to 301 (ERRKRSRSRSRHSS) has biased composition (basic residues). A compositionally biased stretch (basic and acidic residues) spans 302–311 (RTSDRRCSRS). The segment covering 312–367 (RDHKRSRSRERRRSRSRDRRRSRSHDRSERKHRSRSRDRRRSKSRDRKSYKHRSKS) has biased composition (basic residues). Residues 368–414 (RDREQDRKSKEKEKRGSDDKKSSVKSGSREKQSEDTNTESKESDTKN) show a composition bias toward basic and acidic residues. Ser420 bears the Phosphoserine mark. Basic and acidic residues predominate over residues 421 to 432 (EDIKSEGDTQSN). Residue Lys424 forms a Glycyl lysine isopeptide (Lys-Gly) (interchain with G-Cter in SUMO1); alternate linkage. Lys424 participates in a covalent cross-link: Glycyl lysine isopeptide (Lys-Gly) (interchain with G-Cter in SUMO2); alternate. Phosphoserine is present on residues Ser425 and Ser431.

The protein belongs to the Luc7 family. May interact with SFRS1 and form homodimers. Interacts with JMJD6. Interacts with RBM25. Interacts with RSRC1 (via Arg/Ser-rich domain). Interacts with RRP1B. In terms of processing, phosphorylated in vitro by SRPK1, SRPK2 and CLK1. As to expression, widely expressed. Highest levels in heart, brain, pancreas, thymus, ovary, small intestine and peripheral blood leukocytes, as well as cerebellum, putamen and pituitary gland. Lowest levels in lung, liver and kidney. Also expressed in fetal tissues, including brain, heart, kidney, thymus and lung.

It is found in the nucleus speckle. Binds cAMP regulatory element DNA sequence. May play a role in RNA splicing. This Homo sapiens (Human) protein is Luc7-like protein 3 (LUC7L3).